The chain runs to 37 residues: Potassium channel toxin alpha-KTx 1.11 (37 aa).

3 cysteine pairs are disulfide-bonded: Cys-7–Cys-28, Cys-13–Cys-33, and Cys-17–Cys-35.

It belongs to the short scorpion toxin superfamily. Potassium channel inhibitor family. Alpha-KTx 01 subfamily. In terms of tissue distribution, expressed by the venom gland.

It localises to the secreted. Its function is as follows. Reversibly blocks the high conductance calcium-activated potassium channels composed of only alpha subunits (KCa1.1/KCNMA1). Unreversibly blocks the high conductance calcium-activated potassium channels composed of alpha and beta1 subunits (KCNMA1 and KCNMB1). Unreversibly and weakly blocks the high conductance calcium-activated potassium channels composed of alpha and beta4 (KCNMA1 and KCNMB4). This is Potassium channel toxin alpha-KTx 1.11 from Centruroides noxius (Mexican scorpion).